The following is a 276-amino-acid chain: MQTIIDAWFVQGMIKATSDAWLKGWDERNGGNLTLRLDEADIEPYAADFHAKPRYIALSQPMPTLANQPFIVTGSGKFFRNVQLDPAANLGVVKVDSDGAGYHILWGLTEDAVPTSELPAHFLSHSERIKLTGGKDRVIMHCHATNLIALTYVLENHSDLFTRKLWEGSTECLVVFPDGVGILPWMVPGTDEIGQATAETMQKHSLVLWPFHGVFGSGPTLDETFGLIDTAEKSAEVLVKVLSMGGMKQTITRDELIALGKRFNVQPLQSALDLYP.

The active site involves E117. Positions 141, 143, and 212 each coordinate Zn(2+).

The protein belongs to the aldolase class II family. RhaD subfamily. In terms of assembly, homotetramer. It depends on Zn(2+) as a cofactor.

It localises to the cytoplasm. The catalysed reaction is L-rhamnulose 1-phosphate = (S)-lactaldehyde + dihydroxyacetone phosphate. It functions in the pathway carbohydrate degradation; L-rhamnose degradation; glycerone phosphate from L-rhamnose: step 3/3. Functionally, catalyzes the reversible cleavage of L-rhamnulose-1-phosphate to dihydroxyacetone phosphate (DHAP) and L-lactaldehyde. This is Rhamnulose-1-phosphate aldolase from Klebsiella pneumoniae subsp. pneumoniae (strain ATCC 700721 / MGH 78578).